Consider the following 799-residue polypeptide: Integrin beta-1 (799 aa).

An N-terminal signal peptide occupies residues 1–20; sequence MNLQLVFWIGLISLICSVFG. Residues 21-729 lie on the Extracellular side of the membrane; sequence QTDKNRCLKA…ETPDCPTGPD (709 aa). The PSI domain occupies 26–76; sequence RCLKANAKSCGECIQAGPNCGWCTNTTFLQEGMPTSARCDDLEALKKKGCH. Intrachain disulfides connect Cys27–Cys45, Cys35–Cys465, Cys38–Cys64, Cys48–Cys75, Cys207–Cys213, Cys261–Cys301, Cys401–Cys415, Cys435–Cys463, Cys467–Cys487, Cys478–Cys490, Cys492–Cys501, Cys503–Cys534, Cys517–Cys532, Cys526–Cys537, Cys539–Cys554, Cys556–Cys577, Cys561–Cys575, Cys569–Cys580, Cys582–Cys591, Cys593–Cys616, Cys600–Cys614, Cys608–Cys619, Cys621–Cys631, Cys634–Cys637, Cys641–Cys692, Cys647–Cys666, Cys650–Cys662, and Cys700–Cys724. N-linked (GlcNAc...) asparagine glycans are attached at residues Asn50, Asn94, and Asn97. The VWFA domain occupies 140–378; that stretch reads DYPIDLYYLM…QLIIDAYNSL (239 aa). Positions 152 and 154 each coordinate Mg(2+). Ca(2+) contacts are provided by Ser154, Asp157, Asp158, and Glu189. The tract at residues 207–213 is CX3CL1-binding; that stretch reads CTSEQNC. An N-linked (GlcNAc...) asparagine glycan is attached at Asn212. Residues Asn244, Asp246, Pro248, and Glu249 each coordinate Ca(2+). Residue Glu249 participates in Mg(2+) binding. Asn269 carries N-linked (GlcNAc...) asparagine glycosylation. The segment at 295-314 is CX3CL1-binding; that stretch reads LPNDGQCHLENNVYTMSHYY. Gly362 serves as a coordination point for Ca(2+). 3 N-linked (GlcNAc...) asparagine glycosylation sites follow: Asn363, Asn406, and Asn417. The segment at 383-466 is interaction with TMEM182; the sequence is ILENSKLPDG…VVLQFICKCN (84 aa). I-EGF domains follow at residues 467–502, 503–555, 556–592, and 593–632; these read CQSH…RHCE, CSTD…KFCE, CDNF…SACD, and CSLD…PTCE. An N-linked (GlcNAc...) asparagine glycan is attached at Asn482. Asn521 is a glycosylation site (N-linked (GlcNAc...) asparagine). The N-linked (GlcNAc...) asparagine glycan is linked to Asn585. Asn670 carries an N-linked (GlcNAc...) asparagine glycan. Residues 730–752 traverse the membrane as a helical segment; sequence IIPIVAGVVAGIVLIGLALLLIW. At 753–799 the chain is on the cytoplasmic side; that stretch reads KLLMIIHDRREFAKFEKEKMNAKWDTGENPIYKSAVTTVVNPKYEGK. Residues 763 to 768 are signal for sorting from recycling endosomes; interaction with ACAP1; it reads EFAKFE. Phosphothreonine is present on Thr778. Tyr784 bears the Phosphotyrosine mark. Ser786 carries the post-translational modification Phosphoserine. Residues 786–793 form an interaction with ITGB1BP1 region; it reads SAVTTVVN. Position 790 is a phosphothreonine (Thr790). Lys795 is modified (N6-acetyllysine; alternate). Lys795 participates in a covalent cross-link: Glycyl lysine isopeptide (Lys-Gly) (interchain with G-Cter in SUMO1); alternate.

Belongs to the integrin beta chain family. Interacts with seprase FAP (seprase); the interaction occurs at the cell surface of invadopodia membrane in a collagen-dependent manner. Heterodimer of an alpha and a beta subunit. Beta-1 associates with either alpha-1, alpha-2, alpha-3, alpha-4, alpha-5, alpha-6, alpha-7, alpha-8, alpha-9, alpha-10, alpha-11 or alpha-V. ITGA6:ITGB1 is found in a complex with CD9; interaction takes place in oocytes and is involved in sperm-egg fusion. Binds LGALS3BP and NMRK2, when associated with alpha-7, but not with alpha-5. Interacts with FLNA, FLNB, FLNC and RANBP9. Interacts with KRT1 in the presence of RACK1 and SRC. Interacts with JAML; integrin alpha-4/beta-1 may regulate leukocyte to endothelial cells adhesion by controlling JAML homodimerization. Interacts with RAB21. Interacts (via the cytoplasmic region) with RAB25 (via the hypervariable C-terminal region). Interacts with MYO10. Interacts with ITGB1BP1 (via C-terminal region); the interaction is a prerequisite for focal adhesion disassembly. Interacts with TLN1; the interaction is prevented by competitive binding of ITGB1BP1. Interacts with ACAP1; required for ITGB1 recycling. Interacts with ASAP3. Interacts with FERMT2; the interaction is inhibited in presence of ITGB1BP1. Interacts with DAB2. Interacts with FGR and HCK. Interacts with alpha-7A and alpha-7B in adult skeletal muscle. Interacts with alpha-7B in cardiomyocytes of adult heart. Interacts with EMP2; the interaction may be direct or indirect and ITGB1 has a heterodimer form. ITGA5:ITGB1 interacts with CCN3. ITGA4:ITGB1 is found in a ternary complex with CX3CR1 and CX3CL1. ITGA5:ITGB1 interacts with FBN1. ITGA5:ITGB1 acts as a receptor for fibronectin FN1 and mediates R-G-D-dependent cell adhesion to FN1. ITGA5:ITGB1 interacts with IL1B. Interacts with MDK. ITGA4:ITGB1 interacts with MDK; this interaction mediates MDK-induced osteoblast cells migration through PXN phosphorylation. ITGA6:ITGB1 interacts with MDK; this interaction mediates MDK-induced neurite-outgrowth. ITGA5:ITGB1 interacts with ACE2. Interacts with TMEM182 and LAMB1. Interacts with tensin TNS3; TNS3 also interacts with PEAK1, thus acting as an adapter molecule to bridge the association of PEAK1 with ITGB1. Interacts with tensin TNS4; the interaction displaces tensin TNS3 from the ITGB1 cytoplasmic tail and promotes ITGB1 stability. Integrin ITGA9:ITGB1 interacts with SPP1/OPN (via N-terminus). Integrin ITGA9:ITGB1 interacts with TNC/TNFN3 (via the 3rd Fibronectin type-III domain). Integrins ITGA4:ITGB1 and ITGA9:ITGB1 interact with SVEP1 (via Sushi domain 21); thereby inhibit Ca(2+) intracellular signaling and as a result repress vasocontraction. ITGA4:ITGB1 and ITGA5:ITGB1 interacts with SELP. ITGA5:ITGB1 interacts with IGFBP1. ITGA4:ITGB1 interacts with BCAM. Interacts with ADGRG6.

Its subcellular location is the cell membrane. The protein localises to the cell projection. It is found in the invadopodium membrane. It localises to the ruffle membrane. The protein resides in the recycling endosome. Its subcellular location is the melanosome. The protein localises to the lamellipodium. It is found in the ruffle. It localises to the cell junction. The protein resides in the focal adhesion. In terms of biological role, integrins alpha-1/beta-1, alpha-2/beta-1, alpha-10/beta-1 and alpha-11/beta-1 are receptors for collagen. Integrins alpha-1/beta-1 and alpha-2/beta-2 recognize the proline-hydroxylated sequence G-F-P-G-E-R in collagen. Integrins alpha-2/beta-1, alpha-3/beta-1, alpha-4/beta-1, alpha-5/beta-1, alpha-8/beta-1, alpha-10/beta-1, alpha-11/beta-1 and alpha-V/beta-1 are receptors for fibronectin. Alpha-4/beta-1 recognizes one or more domains within the alternatively spliced CS-1 and CS-5 regions of fibronectin. Integrin alpha-5/beta-1 is a receptor for fibrinogen. Integrin alpha-1/beta-1, alpha-2/beta-1, alpha-6/beta-1 and alpha-7/beta-1 are receptors for lamimin. Integrin alpha-6/beta-1 (ITGA6:ITGB1) is present in oocytes and is involved in sperm-egg fusion. Integrin alpha-4/beta-1 is a receptor for VCAM1 and recognizes the sequence Q-I-D-S in VCAM1. Integrin alpha-9/beta-1 is a receptor for VCAM1, cytotactin and osteopontin. It recognizes the sequence A-E-I-D-G-I-E-L in cytotactin. Integrin alpha-3/beta-1 is a receptor for epiligrin, thrombospondin and CSPG4. Integrin alpha-3/beta-1 provides a docking site for FAP (seprase) at invadopodia plasma membranes in a collagen-dependent manner and hence may participate in the adhesion, formation of invadopodia and matrix degradation processes, promoting cell invasion. Alpha-3/beta-1 may mediate with LGALS3 the stimulation by CSPG4 of endothelial cells migration. Integrin alpha-V/beta-1 is a receptor for vitronectin. Beta-1 integrins recognize the sequence R-G-D in a wide array of ligands. When associated with alpha-7/beta-1 integrin, regulates cell adhesion and laminin matrix deposition. Involved in promoting endothelial cell motility and angiogenesis. Involved in osteoblast compaction through the fibronectin fibrillogenesis cell-mediated matrix assembly process and the formation of mineralized bone nodules. May be involved in up-regulation of the activity of kinases such as PKC via binding to KRT1. Together with KRT1 and RACK1, serves as a platform for SRC activation or inactivation. Plays a mechanistic adhesive role during telophase, required for the successful completion of cytokinesis. ITGA4:ITGB1 binds to fractalkine (CX3CL1) and may act as its coreceptor in CX3CR1-dependent fractalkine signaling. ITGA4:ITGB1 and ITGA5:ITGB1 bind to PLA2G2A via a site (site 2) which is distinct from the classical ligand-binding site (site 1) and this induces integrin conformational changes and enhanced ligand binding to site 1. ITGA5:ITGB1 acts as a receptor for fibrillin-1 (FBN1) and mediates R-G-D-dependent cell adhesion to FBN1. ITGA5:ITGB1 is a receptor for IL1B and binding is essential for IL1B signaling. ITGA5:ITGB3 is a receptor for soluble CD40LG and is required for CD40/CD40LG signaling. Plays an important role in myoblast differentiation and fusion during skeletal myogenesis. ITGA9:ITGB1 may play a crucial role in SVEP1/polydom-mediated myoblast cell adhesion. Integrins ITGA9:ITGB1 and ITGA4:ITGB1 repress PRKCA-mediated L-type voltage-gated channel Ca(2+) influx and ROCK-mediated calcium sensitivity in vascular smooth muscle cells via their interaction with SVEP1, thereby inhibit vasocontraction. This chain is Integrin beta-1 (Itgb1), found in Rattus norvegicus (Rat).